The primary structure comprises 139 residues: D-ribose pyranase (139 aa).

The active-site Proton donor is the His-20. Substrate is bound by residues Asp-28, His-106, and 128–130 (YAN).

Belongs to the RbsD / FucU family. RbsD subfamily. In terms of assembly, homodecamer.

It is found in the cytoplasm. It catalyses the reaction beta-D-ribopyranose = beta-D-ribofuranose. Its pathway is carbohydrate metabolism; D-ribose degradation; D-ribose 5-phosphate from beta-D-ribopyranose: step 1/2. Functionally, catalyzes the interconversion of beta-pyran and beta-furan forms of D-ribose. This chain is D-ribose pyranase, found in Escherichia coli (strain 55989 / EAEC).